The following is a 516-amino-acid chain: MSRGPEEVNRLTENTYRNVVEQFNPGLRNLINLGKNYEKAVNAMILAGKAYYDGVAKIGEIATGSPVSTELGHVLIEISSTHKKLNETLDENFKKFHKEIIHELEKKTELDVKYMNATLKRYQAEHRNKLDSLEKSQAELKKIRRKSQGGRNALKYEHKEIEYVETVTSRQSEIQKFIADGCKEALLEEKRRFCFLVDKHCSFASHIHRYHLQSAELLNSKLPRWQETCCDATKVPEKIMNMIEEIKTPISTPVSGTPQPSPMTERSKMIGKDYDTLSKYSPKMPPAPSVKAYTSPLIDMFNNPATAGQSAEKTNNSTANTGDDPSLQRSVSVATGLNMMKKQKVKTIFPHTAGNNKTLLSFAQGDVLTLLIPEEKDGWLYGEHDTTKVRGWFPSSYTKLLEENMKEAMSVPTPSSAPVRSISTVDLTEKSSVVIPPPDYLECLSMGATSDKRADAAKIPSTSTFKAPVPRPDATSTSPSDSNGTAKPPFLSGENPFATVKLRPTVTNDRSAPIIR.

An IMD domain is found at 1–249 (MSRGPEEVNR…MNMIEEIKTP (249 aa)). Positions 115–148 (MNATLKRYQAEHRNKLDSLEKSQAELKKIRRKSQ) form a coiled coil. 2 positions are modified to phosphothreonine: threonine 248 and threonine 257. Residues serine 261 and serine 281 each carry the phosphoserine modification. Residues 303 to 328 (NPATAGQSAEKTNNSTANTGDDPSLQ) are disordered. Serine 332 carries the phosphoserine modification. The SH3 domain maps to 340–403 (MKKQKVKTIF…PSSYTKLLEE (64 aa)). Residue threonine 413 is modified to Phosphothreonine. Serine 415, serine 421, and serine 423 each carry phosphoserine. The interval 454–516 (ADAAKIPSTS…TNDRSAPIIR (63 aa)) is disordered. Over residues 474 to 485 (ATSTSPSDSNGT) the composition is skewed to polar residues. The interval 488 to 516 (PPFLSGENPFATVKLRPTVTNDRSAPIIR) is binds F-actin.

As to quaternary structure, interacts with RAC1. Binds to F-actin. Interacts with FASLG. Phosphorylated on tyrosine in response to insulin.

It is found in the cytoplasm. The protein resides in the cytoskeleton. Its function is as follows. May function as adapter protein. Involved in the formation of clusters of actin bundles. Plays a role in the reorganization of the actin cytoskeleton in response to bacterial infection. This chain is BAR/IMD domain-containing adapter protein 2-like 1 (Baiap2l1), found in Rattus norvegicus (Rat).